Reading from the N-terminus, the 377-residue chain is Chaperone protein DnaJ (377 aa).

The region spanning 5 to 70 (DFYETLGVSK…QKRAAYDRFG (66 aa)) is the J domain. A CR-type zinc finger spans residues 138–216 (GKTAQIRVPT…CHGQGRVTEE (79 aa)). 8 residues coordinate Zn(2+): Cys-151, Cys-154, Cys-168, Cys-171, Cys-190, Cys-193, Cys-204, and Cys-207. CXXCXGXG motif repeat units follow at residues 151–158 (CDVCSGSG), 168–175 (CATCQGSG), 190–197 (CPTCHGRG), and 204–211 (CGKCHGQG).

The protein belongs to the DnaJ family. As to quaternary structure, homodimer. Requires Zn(2+) as cofactor.

The protein resides in the cytoplasm. Functionally, participates actively in the response to hyperosmotic and heat shock by preventing the aggregation of stress-denatured proteins and by disaggregating proteins, also in an autonomous, DnaK-independent fashion. Unfolded proteins bind initially to DnaJ; upon interaction with the DnaJ-bound protein, DnaK hydrolyzes its bound ATP, resulting in the formation of a stable complex. GrpE releases ADP from DnaK; ATP binding to DnaK triggers the release of the substrate protein, thus completing the reaction cycle. Several rounds of ATP-dependent interactions between DnaJ, DnaK and GrpE are required for fully efficient folding. Also involved, together with DnaK and GrpE, in the DNA replication of plasmids through activation of initiation proteins. The protein is Chaperone protein DnaJ of Agrobacterium fabrum (strain C58 / ATCC 33970) (Agrobacterium tumefaciens (strain C58)).